Consider the following 206-residue polypeptide: Cytidylate kinase (206 aa).

9–17 lines the ATP pocket; that stretch reads GPAAAGKGT. A compositionally biased stretch (basic and acidic residues) spans 155–168; that stretch reads LRERDRRDREREAA. The interval 155–174 is disordered; sequence LRERDRRDREREAAPLRPAP.

This sequence belongs to the cytidylate kinase family. Type 1 subfamily.

The protein localises to the cytoplasm. It catalyses the reaction CMP + ATP = CDP + ADP. The enzyme catalyses dCMP + ATP = dCDP + ADP. The polypeptide is Cytidylate kinase (Cereibacter sphaeroides (strain KD131 / KCTC 12085) (Rhodobacter sphaeroides)).